The sequence spans 572 residues: DNA mismatch repair protein MutL (572 aa).

It belongs to the DNA mismatch repair MutL/HexB family.

Functionally, this protein is involved in the repair of mismatches in DNA. It is required for dam-dependent methyl-directed DNA mismatch repair. May act as a 'molecular matchmaker', a protein that promotes the formation of a stable complex between two or more DNA-binding proteins in an ATP-dependent manner without itself being part of a final effector complex. This chain is DNA mismatch repair protein MutL, found in Dictyoglomus turgidum (strain DSM 6724 / Z-1310).